We begin with the raw amino-acid sequence, 148 residues long: Antigen GM6 (148 aa).

The interval 1–22 is disordered; sequence KLKASDSRSFLDPMPEGVPLSE. Tandem repeats lie at residues 1–68 and 69–136. The 3; truncated repeat unit spans residues 137–148; it reads KLKASDSRSFQS.

The protein resides in the cytoplasm. It is found in the cytoskeleton. This chain is Antigen GM6 (GM6), found in Trypanosoma brucei gambiense.